The primary structure comprises 813 residues: Origin of replication complex subunit 1B (813 aa).

The interval 1 to 109 (MASTPRAKTF…TPKKKKKIDS (109 aa)) is disordered. The segment covering 11-21 (KSPTKTPSNIY) has biased composition (polar residues). The segment covering 27-41 (SPSSTSHTPQTPETH) has biased composition (low complexity). The segment covering 43 to 52 (PLRRSARHVS) has biased composition (basic residues). The short motif at 83-90 (PRKPTTDV) is the Nuclear localization signal element. A histone H3 binding region spans residues 163 to 187 (DPEIEDCQICFKSDTNIMIECDDCL). A PHD-type zinc finger spans residues 166–215 (IEDCQICFKSDTNIMIECDDCLGGFHLKCLKPPLKEVPEGDWICQFCEVK). Zn(2+) contacts are provided by Cys169, Cys172, Cys183, Cys186, His191, and Cys194. The interval 203–207 (PEGDW) is histone H3 binding. Zn(2+) contacts are provided by Cys209 and Cys212. Positions 226–344 (PKPPEGKKLA…VHWRSFKRLA (119 aa)) constitute a BAH domain. The tract at residues 319–324 (ASNDGD) is histone H3 binding. Positions 349–372 (GDSDSDQEWNGRKEEEVDDSDEEM) are disordered. Residues 436 to 803 (PKSLPCRSKE…DDVAFALKDN (368 aa)) form a necessary and sufficient for ORC complex assembly region. ATP is bound at residue 471-479 (GVPGTGKTI). Mg(2+)-binding residues include Asp561 and Glu562. ATP contacts are provided by Glu562, Asn595, and Arg660.

This sequence belongs to the ORC1 family. Component of the origin recognition complex (ORC) composed of at least ORC1 (ORC1A or ORC1B), ORC2, ORC3, ORC4, ORC5 and ORC6. ORC is regulated in a cell-cycle and development dependent manner. It is sequentially assembled at the exit from anaphase of mitosis and disassembled as cells enter S phase. Interacts directly with ORC2 and ORC5. Binds mostly unmodified histone H3, and, with lower efficiency, H3K4me1 H3K4me2 and H3K4me3. Follow a cell-cycle regulation with a peak at the G1/S-phase. Mostly expressed in flower buds, and, to a lower exent, in roots, leaves and stems.

The protein localises to the nucleus. Essential protein required for ovules fertilization. Component of the origin recognition complex (ORC) that binds origins of replication. It has a role in both chromosomal replication and mating type transcriptional silencing. Binds to the ARS consensus sequence (ACS) of origins of replication. H3K4me3 effector that positively regulates the transcription of a subset of genes. In Arabidopsis thaliana (Mouse-ear cress), this protein is Origin of replication complex subunit 1B.